Here is a 441-residue protein sequence, read N- to C-terminus: Ribulose bisphosphate carboxylase large chain (441 aa).

N6,N6,N6-trimethyllysine is present on lysine 5. Residues asparagine 114 and threonine 164 each contribute to the substrate site. The active-site Proton acceptor is lysine 166. Residue lysine 168 participates in substrate binding. 3 residues coordinate Mg(2+): lysine 192, aspartate 194, and glutamate 195. N6-carboxylysine is present on lysine 192. Catalysis depends on histidine 285, which acts as the Proton acceptor. Residues arginine 286, histidine 318, and serine 370 each contribute to the substrate site.

It belongs to the RuBisCO large chain family. Type I subfamily. As to quaternary structure, heterohexadecamer of 8 large chains and 8 small chains; disulfide-linked. The disulfide link is formed within the large subunit homodimers. It depends on Mg(2+) as a cofactor. The disulfide bond which can form in the large chain dimeric partners within the hexadecamer appears to be associated with oxidative stress and protein turnover.

Its subcellular location is the plastid. It localises to the chloroplast. The catalysed reaction is 2 (2R)-3-phosphoglycerate + 2 H(+) = D-ribulose 1,5-bisphosphate + CO2 + H2O. It carries out the reaction D-ribulose 1,5-bisphosphate + O2 = 2-phosphoglycolate + (2R)-3-phosphoglycerate + 2 H(+). Its function is as follows. RuBisCO catalyzes two reactions: the carboxylation of D-ribulose 1,5-bisphosphate, the primary event in carbon dioxide fixation, as well as the oxidative fragmentation of the pentose substrate in the photorespiration process. Both reactions occur simultaneously and in competition at the same active site. The chain is Ribulose bisphosphate carboxylase large chain from Argyrochosma delicatula (Delicate cloak fern).